A 206-amino-acid chain; its full sequence is Ras-related protein Rab-18 (206 aa).

Met-1 carries the N-acetylmethionine modification. GTP-binding residues include Ser-17, Gly-20, Lys-21, Ser-22, Ser-23, Asp-34, Pro-35, Thr-40, Gly-66, Lys-123, and Asp-125. Position 22 (Ser-22) interacts with Mg(2+). Short sequence motifs (switch) lie at residues 31–45 (DTFD…GVDF) and 63–80 (DTAG…YYRG). Thr-40 serves as a coordination point for Mg(2+). Phosphoserine is present on Ser-144. Residue Ala-152 coordinates GTP. Cys-199 carries S-palmitoyl cysteine lipidation. Residue Cys-203 is modified to Cysteine methyl ester. Cys-203 carries the S-geranylgeranyl cysteine lipid modification. Residues 204–206 (SVL) constitute a propeptide, removed in mature form.

It belongs to the small GTPase superfamily. Rab family. In terms of assembly, interacts (in GTP-bound form) with ZFYVE1. Interacts with ZW10 and this interaction is enhanced in the presence of ZFYVE1. Interacts with BSCL2. The cofactor is Mg(2+). In terms of tissue distribution, expression is high in the brain, moderate in the pituitary, and low in the liver. Detected in all tissues. Highly enriched on apical endocytic structures in polarized epithelial cells of kidney proximal tubules. Detected on both the apical and basolateral domains in epithelial cells of the intestine.

Its subcellular location is the endoplasmic reticulum membrane. The protein resides in the golgi apparatus. The protein localises to the cis-Golgi network membrane. It is found in the lipid droplet. It localises to the apical cell membrane. It carries out the reaction GTP + H2O = GDP + phosphate + H(+). Regulated by guanine nucleotide exchange factor (GEF) RAB3GAP1-RAB3GAP2 complex at the cis-Golgi membrane which promotes the exchange of bound GDP for free GTP. Regulated by GTPase activating protein (GAP) TBC1D20 at the ER membrane which increases the GTP hydrolysis activity. Inhibited by GDP dissociation inhibitors (GDIs) which prevent Rab-GDP dissociation. The small GTPases Rab are key regulators of intracellular membrane trafficking, from the formation of transport vesicles to their fusion with membranes. Rabs cycle between an inactive GDP-bound form and an active GTP-bound form that is able to recruit to membranes different sets of downstream effectors directly responsible for vesicle formation, movement, tethering and fusion. RAB18 is required for the localization of ZFYVE1 to lipid droplets and for its function in mediating the formation of endoplasmic reticulum-lipid droplets (ER-LD) contacts. Also required for maintaining endoplasmic reticulum structure. Plays a role in apical endocytosis/recycling. Plays a key role in eye and brain development and neurodegeneration. The protein is Ras-related protein Rab-18 of Mus musculus (Mouse).